Reading from the N-terminus, the 335-residue chain is Galactinol synthase 2 (335 aa).

The active site involves lysine 103. Residues aspartate 119, aspartate 121, and histidine 257 each coordinate Mn(2+).

It belongs to the glycosyltransferase 8 family. Galactosyltransferase subfamily. Requires a divalent metal cation as cofactor. As to expression, accumulates in mature seeds.

It is found in the cytoplasm. The catalysed reaction is myo-inositol + UDP-alpha-D-galactose = alpha-D-galactosyl-(1-&gt;3)-1D-myo-inositol + UDP + H(+). Its function is as follows. Galactinol synthase involved in the biosynthesis of raffinose family oligosaccharides (RFOs) that function as osmoprotectants. Promotes stress tolerance of factors such as drought, chilling, salinity and methylviologen (MV), a superoxide radical generating drug, by mediating an increase in levels of the endogenous osmoprotective compounds, galactinol and raffinose. The polypeptide is Galactinol synthase 2 (GOLS2) (Arabidopsis thaliana (Mouse-ear cress)).